A 293-amino-acid chain; its full sequence is Protease HtpX homolog (293 aa).

2 consecutive transmembrane segments (helical) span residues 4-24 (IFLFLITNLAVMVVLSATMRI) and 38-58 (LTGLLIFSAVIGFTGAIISLL). H146 is a Zn(2+) binding site. E147 is an active-site residue. Position 150 (H150) interacts with Zn(2+). The next 2 helical transmembrane spans lie at 161 to 181 (LIQGVVNTFVVFLARVVGYFV) and 198 to 218 (ATVIVCEIVFGILASIIVAWF). E223 contacts Zn(2+).

Belongs to the peptidase M48B family. Requires Zn(2+) as cofactor.

The protein resides in the cell inner membrane. The sequence is that of Protease HtpX homolog from Bordetella parapertussis (strain 12822 / ATCC BAA-587 / NCTC 13253).